The following is a 52-amino-acid chain: Insulin (52 aa).

Cystine bridges form between C7-C38, C19-C51, and C37-C42.

The protein belongs to the insulin family. In terms of assembly, heterodimer of a B chain and an A chain linked by two disulfide bonds.

The protein localises to the secreted. Its function is as follows. Insulin decreases blood glucose concentration. It increases cell permeability to monosaccharides, amino acids and fatty acids. It accelerates glycolysis, the pentose phosphate cycle, and glycogen synthesis in liver. The protein is Insulin (ins) of Amia calva (Bowfin).